Here is a 339-residue protein sequence, read N- to C-terminus: Terpene synthase 9 (339 aa).

A DDxx(x)D/E motif motif is present at residues 79-84; the sequence is DDFLES. Residues 219–227 carry the NDxxSxxxD/E motif motif; it reads NDCASYAKE.

This sequence belongs to the terpene synthase family.

The catalysed reaction is (2E,6E)-farnesyl diphosphate = (-)-beta-barbatene + diphosphate. It carries out the reaction (2E,6E)-farnesyl diphosphate = (E)-beta-farnesene + diphosphate. It catalyses the reaction (2E)-geranyl diphosphate = (Z)-beta-ocimene + diphosphate. The enzyme catalyses (2E)-geranyl diphosphate + H2O = linalool + diphosphate. The catalysed reaction is (2E)-geranyl diphosphate = beta-myrcene + diphosphate. In terms of biological role, terpene synthase that converts its substrate farnesyl diphosphate (FPP) into the sesquiterpene beta-barbatene as a major product as well as (E)-beta-farnesene as a minor product. Is also able to convert geranyl diphosphate (GPP) into a mixture of monoterpenes including (Z)-beta-ocimene, linalool, beta-myrcene, limonene and alpha-terpineol. This is Terpene synthase 9 from Dictyostelium discoideum (Social amoeba).